The primary structure comprises 1410 residues: DNA-directed RNA polymerase subunit beta' (1410 aa).

Zn(2+)-binding residues include C70, C72, C85, and C88. Residues D460, D462, and D464 each coordinate Mg(2+). Zn(2+) is bound by residues C814, C888, C895, and C898.

Belongs to the RNA polymerase beta' chain family. The RNAP catalytic core consists of 2 alpha, 1 beta, 1 beta' and 1 omega subunit. When a sigma factor is associated with the core the holoenzyme is formed, which can initiate transcription. The cofactor is Mg(2+). It depends on Zn(2+) as a cofactor.

The catalysed reaction is RNA(n) + a ribonucleoside 5'-triphosphate = RNA(n+1) + diphosphate. Its function is as follows. DNA-dependent RNA polymerase catalyzes the transcription of DNA into RNA using the four ribonucleoside triphosphates as substrates. The sequence is that of DNA-directed RNA polymerase subunit beta' from Buchnera aphidicola subsp. Cinara cedri (strain Cc).